The chain runs to 210 residues: Type III pantothenate kinase (210 aa).

5-12 (DIGNTYLH) serves as a coordination point for ATP. Substrate contacts are provided by residues Tyr69 and 73 to 76 (GVDR). Asp75 serves as the catalytic Proton acceptor. Residue Asp90 coordinates K(+). Ser93 contributes to the ATP binding site. Substrate is bound at residue Thr145.

The protein belongs to the type III pantothenate kinase family. In terms of assembly, homodimer. NH4(+) serves as cofactor. The cofactor is K(+).

It is found in the cytoplasm. The catalysed reaction is (R)-pantothenate + ATP = (R)-4'-phosphopantothenate + ADP + H(+). Its pathway is cofactor biosynthesis; coenzyme A biosynthesis; CoA from (R)-pantothenate: step 1/5. Catalyzes the phosphorylation of pantothenate (Pan), the first step in CoA biosynthesis. The protein is Type III pantothenate kinase of Wolinella succinogenes (strain ATCC 29543 / DSM 1740 / CCUG 13145 / JCM 31913 / LMG 7466 / NCTC 11488 / FDC 602W) (Vibrio succinogenes).